The sequence spans 238 residues: Ribosomal RNA small subunit methyltransferase G (238 aa).

S-adenosyl-L-methionine is bound by residues G78, F83, 129 to 130 (AE), and R148. Positions 216-238 (EKKKETPKKYPRKAGTPAKNPIK) are disordered.

It belongs to the methyltransferase superfamily. RNA methyltransferase RsmG family.

It is found in the cytoplasm. Specifically methylates the N7 position of a guanine in 16S rRNA. This chain is Ribosomal RNA small subunit methyltransferase G, found in Lactococcus lactis subsp. lactis (strain IL1403) (Streptococcus lactis).